The following is a 91-amino-acid chain: Ice-structuring protein 2A7 (91 aa).

Positions 1-21 are cleaved as a signal peptide; sequence MALSLFTVGQLIFLFWTMRIT. Positions 22–39 are cleaved as a propeptide — removed by a dipeptidylpeptidase; sequence EANPDPAAKAVPAAAAPD.

This sequence belongs to the type-I AFP family. As to expression, detected in blood serum (at protein level).

The protein resides in the secreted. In terms of biological role, contributes to protect fish blood from freezing at subzero sea water temperatures. Lowers the blood freezing point. Binds to nascent ice crystals and prevents further growth. In Pseudopleuronectes americanus (Winter flounder), this protein is Ice-structuring protein 2A7.